A 114-amino-acid polypeptide reads, in one-letter code: Replication initiation control protein YabA (114 aa).

Zn(2+)-binding residues include histidine 79, cysteine 81, cysteine 95, and cysteine 98.

It belongs to the YabA family. As to quaternary structure, homotetramer. Interacts with both DnaA and DnaN, acting as a bridge between these two proteins. Zn(2+) is required as a cofactor.

The protein localises to the cytoplasm. It localises to the nucleoid. Its function is as follows. Involved in control of chromosome replication initiation. Inhibits the cooperative binding of DnaA to the oriC region, thus negatively regulating initiation of chromosome replication. Inhibits the ability of DnaA-ATP to form a helix on DNA; does not disassemble preformed DnaA-DNA helices. Decreases the residence time of DnaA on the chromosome at its binding sites (oriC, replication forks and promoter-binding sites). Tethers DnaA to the replication machinery via the DNA polymerase beta sliding clamp subunit (dnaN). Associates with oriC and other DnaA targets on the chromosome in a DnaA-dependent manner. This is Replication initiation control protein YabA from Lactobacillus johnsonii (strain CNCM I-12250 / La1 / NCC 533).